A 59-amino-acid chain; its full sequence is uncharacterized protein (59 aa).

The chain crosses the membrane as a helical span at residues 7–27 (LLLLVAIALISAFALTVTGVV).

It is found in the membrane. This is an uncharacterized protein from Pyrobaculum aerophilum (strain ATCC 51768 / DSM 7523 / JCM 9630 / CIP 104966 / NBRC 100827 / IM2).